The primary structure comprises 139 residues: MNVKIRNEIQALIRIQERNNNGGELREFICAREVDGYGEKTYLITFDHYSICARYCGESISRAIASGDAFNVDLWEYVMDREYICASDPEAREMWQRIWRDYRLMAKGWARCCYSSLALKAVQLSLRHIPASLREPLLY.

The protein localises to the host cytoplasm. This is an uncharacterized protein from Enterobacteriaceae (Bacteriophage Mu).